The sequence spans 169 residues: Protein FAM106A (169 aa).

This sequence belongs to the FAM106 family.

The chain is Protein FAM106A (FAM106A) from Homo sapiens (Human).